Reading from the N-terminus, the 31-residue chain is MPTITSYFGFLLAASTITSALLIGLSKIRLI.

Residues 4-26 (ITSYFGFLLAASTITSALLIGLS) traverse the membrane as a helical segment.

It belongs to the PetL family. In terms of assembly, the 4 large subunits of the cytochrome b6-f complex are cytochrome b6, subunit IV (17 kDa polypeptide, PetD), cytochrome f and the Rieske protein, while the 4 small subunits are PetG, PetL, PetM and PetN. The complex functions as a dimer.

The protein resides in the plastid. It localises to the chloroplast thylakoid membrane. In terms of biological role, component of the cytochrome b6-f complex, which mediates electron transfer between photosystem II (PSII) and photosystem I (PSI), cyclic electron flow around PSI, and state transitions. PetL is important for photoautotrophic growth as well as for electron transfer efficiency and stability of the cytochrome b6-f complex. The protein is Cytochrome b6-f complex subunit 6 of Chloranthus spicatus (Chulantree).